The primary structure comprises 382 residues: ATP phosphoribosyltransferase regulatory subunit (382 aa).

It belongs to the class-II aminoacyl-tRNA synthetase family. HisZ subfamily. Heteromultimer composed of HisG and HisZ subunits.

Its subcellular location is the cytoplasm. Its pathway is amino-acid biosynthesis; L-histidine biosynthesis; L-histidine from 5-phospho-alpha-D-ribose 1-diphosphate: step 1/9. Its function is as follows. Required for the first step of histidine biosynthesis. May allow the feedback regulation of ATP phosphoribosyltransferase activity by histidine. The polypeptide is ATP phosphoribosyltransferase regulatory subunit (Burkholderia vietnamiensis (strain G4 / LMG 22486) (Burkholderia cepacia (strain R1808))).